A 191-amino-acid polypeptide reads, in one-letter code: MIGTLSGIIEEVQDTSIILAVGGVGYIVHVSYRTLINCKRGDSIKLYIETYVNRDNVPQLYGFTDTEEQNCLKMLIKVSGINYRTALAILDRLTPDQLFSAIVNEDKAALKVGGVGAKLINRIFTELTPLVQKLEFNIMDKRGPSVEDSDALSALLSLGYEKTRVLNALEKVGVSHNLSDTVRFALKELSK.

A domain I region spans residues 1-64 (MIGTLSGIIE…DNVPQLYGFT (64 aa)). Positions 65–145 (DTEEQNCLKM…FNIMDKRGPS (81 aa)) are domain II. A flexible linker region spans residues 146-149 (VEDS). The segment at 149–191 (SDALSALLSLGYEKTRVLNALEKVGVSHNLSDTVRFALKELSK) is domain III.

Belongs to the RuvA family. In terms of assembly, homotetramer. Forms an RuvA(8)-RuvB(12)-Holliday junction (HJ) complex. HJ DNA is sandwiched between 2 RuvA tetramers; dsDNA enters through RuvA and exits via RuvB. An RuvB hexamer assembles on each DNA strand where it exits the tetramer. Each RuvB hexamer is contacted by two RuvA subunits (via domain III) on 2 adjacent RuvB subunits; this complex drives branch migration. In the full resolvosome a probable DNA-RuvA(4)-RuvB(12)-RuvC(2) complex forms which resolves the HJ.

The protein localises to the cytoplasm. Functionally, the RuvA-RuvB-RuvC complex processes Holliday junction (HJ) DNA during genetic recombination and DNA repair, while the RuvA-RuvB complex plays an important role in the rescue of blocked DNA replication forks via replication fork reversal (RFR). RuvA specifically binds to HJ cruciform DNA, conferring on it an open structure. The RuvB hexamer acts as an ATP-dependent pump, pulling dsDNA into and through the RuvAB complex. HJ branch migration allows RuvC to scan DNA until it finds its consensus sequence, where it cleaves and resolves the cruciform DNA. The sequence is that of Holliday junction branch migration complex subunit RuvA from Anaplasma phagocytophilum (strain HZ).